Here is a 325-residue protein sequence, read N- to C-terminus: Siroheme decarboxylase NirDL subunit (325 aa).

This sequence belongs to the Ahb/Nir family. In terms of assembly, forms a complex composed of NirDL, NirG and NirH. All proteins are required for the total conversion of siroheme to didecarboxysiroheme.

The enzyme catalyses siroheme + 2 H(+) = 12,18-didecarboxysiroheme + 2 CO2. The protein operates within porphyrin-containing compound metabolism. Its function is as follows. Involved in heme d1 biosynthesis. Catalyzes the decarboxylation of siroheme into didecarboxysiroheme. The sequence is that of Siroheme decarboxylase NirDL subunit from Paracoccus denitrificans (strain Pd 1222).